The following is a 71-amino-acid chain: Conotoxin TxMMSK-05 (71 aa).

The first 20 residues, 1–20 (MMSKLGALLIICLLLFPLTA), serve as a signal peptide directing secretion. A propeptide spanning residues 21–52 (VPLDGDQHADRPAERLQDDISSKHHPMFDAVR) is cleaved from the precursor. 3 disulfide bridges follow: C54–C70, C55–C66, and C60–C69.

This sequence belongs to the conotoxin M superfamily. As to expression, expressed by the venom duct.

It is found in the secreted. This is Conotoxin TxMMSK-05 from Conus textile (Cloth-of-gold cone).